Consider the following 331-residue polypeptide: Tyrosine recombinase XerD (331 aa).

A Core-binding (CB) domain is found at G8–Y93. Residues A114 to Q318 enclose the Tyr recombinase domain. Residues R161 and K185 contribute to the active site. A compositionally biased stretch (basic and acidic residues) spans Q214–T228. Positions Q214–S239 are disordered. Residues H270, R273, and H296 contribute to the active site. Y305 (O-(3'-phospho-DNA)-tyrosine intermediate) is an active-site residue.

It belongs to the 'phage' integrase family. XerD subfamily. Forms a cyclic heterotetrameric complex composed of two molecules of XerC and two molecules of XerD.

Its subcellular location is the cytoplasm. Site-specific tyrosine recombinase, which acts by catalyzing the cutting and rejoining of the recombining DNA molecules. The XerC-XerD complex is essential to convert dimers of the bacterial chromosome into monomers to permit their segregation at cell division. It also contributes to the segregational stability of plasmids. This is Tyrosine recombinase XerD from Agrobacterium fabrum (strain C58 / ATCC 33970) (Agrobacterium tumefaciens (strain C58)).